We begin with the raw amino-acid sequence, 1620 residues long: ABC-type organic anion transporter ABCA8A (1620 aa).

Transmembrane regions (helical) follow at residues 30–50 (TFLE…FLQL), 224–244 (CFLF…SAGV), 263–283 (SAFW…VTLL), 294–314 (VFLT…LSLI), 328–348 (FLTD…GFTA), 357–377 (LEWL…VQLL), and 397–417 (IGTI…TFYF). Residues Asn-454 and Asn-482 are each glycosylated (N-linked (GlcNAc...) asparagine). In terms of domain architecture, ABC transporter 1 spans 478–713 (IRIRNLTKDY…WGIGYHLSLQ (236 aa)). 514-521 (GHSGAGKS) contacts ATP. The chain crosses the membrane as a helical span at residues 861-881 (IVILILVLGIGLLHILSANIY). N-linked (GlcNAc...) asparagine glycosylation occurs at Asn-967. The next 7 membrane-spanning stretches (helical) occupy residues 979–999 (CFPV…APSA), 1019–1039 (YLAY…YISM), 1068–1088 (ALFE…AFYA), 1105–1125 (ILYV…ISFI), 1133–1153 (SGLW…FMLI), 1159–1179 (ISLF…CTLL), and 1196–1216 (EYSY…VVIL). The ABC transporter 2 domain maps to 1284–1517 (LRKEYKGKKK…FGKEYLLEMK (234 aa)). 1322–1329 (GHNGAGKS) contributes to the ATP binding site.

It belongs to the ABC transporter superfamily. ABCA family. Expressed in lung, heart, liver, skeletal muscle and testis. Highly expressed in the liver, and is also abundant in heart and skeletal muscle. Highly expressed in heart.

The protein resides in the cell membrane. It localises to the basolateral cell membrane. The enzyme catalyses taurocholate(in) + ATP + H2O = taurocholate(out) + ADP + phosphate + H(+). It catalyses the reaction cholesterol(in) + ATP + H2O = cholesterol(out) + ADP + phosphate + H(+). With respect to regulation, cholesterol efflux is increased by extracellularly applied taurocholate. Mediates cholesterol and taurocholate efflux. Through the interaction with ABCA1 potentiates the cholesterol efflux to lipid-free APOA1, in turn regulates high-density lipoprotein cholesterol levels. The sequence is that of ABC-type organic anion transporter ABCA8A from Mus musculus (Mouse).